The primary structure comprises 259 residues: UPF0246 protein NGO_0461 (259 aa).

This sequence belongs to the UPF0246 family.

The polypeptide is UPF0246 protein NGO_0461 (Neisseria gonorrhoeae (strain ATCC 700825 / FA 1090)).